The primary structure comprises 160 residues: Anaerobic nitrite reductase MHB1 (160 aa).

Positions Gly8–Lys157 constitute a Globin domain. The Homodimerization motif lies at Glu41–Ser45. Ser51, Lys65, His69, Lys99, and His104 together coordinate heme b. The Homodimerization signature appears at Asp111 to Glu123.

Belongs to the plant globin family. Homodimer. Heme b is required as a cofactor. As to expression, root specific.

The protein resides in the nucleus matrix. The protein localises to the cytoplasm. The enzyme catalyses Fe(III)-heme b-[protein] + nitric oxide + H2O = Fe(II)-heme b-[protein] + nitrite + 2 H(+). Phytoglobin that reduces nitrite to nitric oxide (NO) under anoxic conditions (e.g. during flooding or in waterlogged soil) and upon root nodulation. Required for general plant development and during nodulation, especially for the onset of symbiosis. Monitors nitric oxide (NO) levels during early phase of the nitrogen-fixing symbiosis and buffers oxygen in functioning nodules. May not function as an oxygen storage or transport protein. Has an unusually high affinity for O(2) through a hexacoordinate heme iron because of a very low dissociation constant. In Medicago sativa (Alfalfa), this protein is Anaerobic nitrite reductase MHB1.